The following is a 329-amino-acid chain: Diaminopimelate epimerase (329 aa).

The substrate site is built by N14 and N73. Residue C82 is the Proton donor of the active site. Residues 83 to 84, N170, N206, and 224 to 225 each bind substrate; these read GN and ER. C233 acts as the Proton acceptor in catalysis. 234-235 contributes to the substrate binding site; the sequence is GT.

It belongs to the diaminopimelate epimerase family. Homodimer.

It is found in the cytoplasm. The catalysed reaction is (2S,6S)-2,6-diaminopimelate = meso-2,6-diaminopimelate. It functions in the pathway amino-acid biosynthesis; L-lysine biosynthesis via DAP pathway; DL-2,6-diaminopimelate from LL-2,6-diaminopimelate: step 1/1. Catalyzes the stereoinversion of LL-2,6-diaminopimelate (L,L-DAP) to meso-diaminopimelate (meso-DAP), a precursor of L-lysine and an essential component of the bacterial peptidoglycan. This Listeria monocytogenes serotype 4b (strain F2365) protein is Diaminopimelate epimerase.